Here is a 42-residue protein sequence, read N- to C-terminus: Potassium channel toxin gamma-KTx 1.8 (42 aa).

4 disulfide bridges follow: Cys5–Cys23, Cys11–Cys34, Cys20–Cys39, and Cys24–Cys41.

Belongs to the ergtoxin family. Gamma-KTx 1 subfamily. As to expression, expressed by the venom gland.

The protein resides in the secreted. Its function is as follows. Blocks in a reversible manner human and rat Kv11.1/KCNH2/ERG1 potassium channels. Also completely and irreversibly blocks rat Kv11.2/KCNH6/ERG2 and human Kv11.3/KCNH7/ERG3 channels. Also weakly inhibits Kir2.1/KCNJ2 and Kv1.2/KCNA2 potassium channels. The chain is Potassium channel toxin gamma-KTx 1.8 from Centruroides elegans (Bark scorpion).